The primary structure comprises 143 residues: Large ribosomal subunit protein uL15 (143 aa).

The segment at 1–54 (MQLNSIKPAPGAKHPKRRVGRGIGSGLGKTAGRGHKGQKSRAGGFHKVGFEGGQ) is disordered. Residues 21 to 31 (RGIGSGLGKTA) are compositionally biased toward gly residues.

The protein belongs to the universal ribosomal protein uL15 family. Part of the 50S ribosomal subunit.

Binds to the 23S rRNA. The sequence is that of Large ribosomal subunit protein uL15 from Nitrosospira multiformis (strain ATCC 25196 / NCIMB 11849 / C 71).